Reading from the N-terminus, the 550-residue chain is MPKEKYDPPDPRRIYTIMSAEEVANGKKSRWDELEISGRVRSLSMSLWSLTHLTVLHLSDNNLSRIPPDIAKLHNLVYLDLSSNKLRSLPAELGNVVSLRELLLNNNLLRVLPFELGRLFRLQTLGLKGNPLSQDILGLYQEPDGMRKLLNYMLDNLSVHPEQLPQRPWITLKERDQILPSVPFTVMCFNVLCDKYATRQLYGYCPSWALNWEYRKKGIMEEIVSCDADIISLQEVETEQYYTLFMPALKERGYDGFFSPKSRAKIMSDQEKKHVDGCAIFFRTEKFSLVQKHTVEFNQIAMANSEGSEAMLNRVMTKDNIGVSVLLEVHTDFSGAGMKPHHSSEKQLLMVANAHMHWDPEYSDVKLIQTMMFVSELKSIIEKAASRPGSPTPDSNSIPFVLCADLNSLPDSGVVEYLTNGGVADNHKDFKELRYNECLTNFSCNGKNGTPDGRITHGFQLRSAYENNLMPYTNYTFDFKGVIDYIFYSKTHIDVLGVLGPLDPQWMMDNNIAGCPHPHIPSDHFSLLTQLELHPPFLPVINGVHLPSRR.

A required for interaction with cnot1, cnot3 and cnot7 region spans residues 1 to 148 (MPKEKYDPPD…LYQEPDGMRK (148 aa)). LRR repeat units lie at residues 52-73 (HLTV…IAKL), 75-96 (NLVY…LGNV), 98-120 (SLRE…GRLF), and 121-143 (RLQT…YQEP). Residues 153–550 (MLDNLSVHPE…INGVHLPSRR (398 aa)) form a nuclease domain region. Glu235 contributes to the Mg(2+) binding site. Substrate-binding residues include Glu235, Glu271, His355, and Pro360. Asp405 provides a ligand contact to Mg(2+). Residue Asp405 is the Proton donor/acceptor of the active site. Substrate is bound by residues Asn407, Asn474, and Phe479.

This sequence belongs to the CCR4/nocturin family. Component of the CCR4-NOT complex. Mg(2+) serves as cofactor.

It localises to the cytoplasm. The protein localises to the nucleus. It catalyses the reaction Exonucleolytic cleavage of poly(A) to 5'-AMP.. Its function is as follows. Poly(A) nuclease with 3'-5' RNase activity. Catalytic component of the CCR4-NOT complex which is one of the major cellular mRNA deadenylases and is linked to various cellular processes including bulk mRNA degradation, miRNA-mediated repression, translational repression during translational initiation and general transcription regulation. Additional complex functions may be a consequence of its influence on mRNA expression. This Xenopus laevis (African clawed frog) protein is CCR4-NOT transcription complex subunit 6-like-B (cnot6l-b).